The sequence spans 343 residues: tRNA-specific 2-thiouridylase MnmA 2 (343 aa).

Residues 7–14 (GMSGGVDS) and L33 each bind ATP. C91 (nucleophile) is an active-site residue. A disulfide bond links C91 and C189. G115 contributes to the ATP binding site. An interaction with tRNA region spans residues 139–141 (KDQ). The active-site Cysteine persulfide intermediate is C189.

This sequence belongs to the MnmA/TRMU family.

It localises to the cytoplasm. The catalysed reaction is S-sulfanyl-L-cysteinyl-[protein] + uridine(34) in tRNA + AH2 + ATP = 2-thiouridine(34) in tRNA + L-cysteinyl-[protein] + A + AMP + diphosphate + H(+). Functionally, catalyzes the 2-thiolation of uridine at the wobble position (U34) of tRNA, leading to the formation of s(2)U34. The polypeptide is tRNA-specific 2-thiouridylase MnmA 2 (Fusobacterium nucleatum subsp. nucleatum (strain ATCC 25586 / DSM 15643 / BCRC 10681 / CIP 101130 / JCM 8532 / KCTC 2640 / LMG 13131 / VPI 4355)).